The sequence spans 346 residues: uncharacterized protein (346 aa).

Position 65 (histidine 65) interacts with Zn(2+). Residue aspartate 67 is part of the active site. Zn(2+) is bound at residue aspartate 89. Residue glutamate 115 is the Proton acceptor of the active site. Zn(2+)-binding residues include glutamate 116, glutamate 145, and histidine 319.

Belongs to the peptidase M20A family. The cofactor is Zn(2+). Requires Co(2+) as cofactor.

This is an uncharacterized protein from Methanocaldococcus jannaschii (strain ATCC 43067 / DSM 2661 / JAL-1 / JCM 10045 / NBRC 100440) (Methanococcus jannaschii).